The sequence spans 169 residues: Der GTPase-activating protein YihI (169 aa).

Disordered regions lie at residues 1 to 99 and 146 to 169; these read MKPS…QAEL and SYDDDEEEEEDEKQEDMMRLLRGN. The span at 10–19 shows a compositional bias: basic residues; that stretch reads SKGHAKARRK. Over residues 20 to 30 the composition is skewed to basic and acidic residues; it reads TREELDQEARD. Residues 31–40 are compositionally biased toward basic residues; that stretch reads RKRQKKRRGH. The span at 49 to 58 shows a compositional bias: polar residues; it reads GNTTSGSKGQ. A compositionally biased stretch (acidic residues) spans 147 to 159; that stretch reads YDDDEEEEEDEKQ. The span at 160-169 shows a compositional bias: basic and acidic residues; it reads EDMMRLLRGN.

The protein belongs to the YihI family. As to quaternary structure, interacts with Der.

A GTPase-activating protein (GAP) that modifies Der/EngA GTPase function. May play a role in ribosome biogenesis. This chain is Der GTPase-activating protein YihI, found in Escherichia coli O81 (strain ED1a).